The chain runs to 613 residues: Maintenance of telomere capping protein 6 (613 aa).

The signal sequence occupies residues 1–17 (MTSLLFAFSLFLSFSVG). The Extracellular segment spans residues 18–557 (SIFPFSTSNG…PYQETVTTDK (540 aa)). N-linked (GlcNAc...) asparagine glycans are attached at residues Asn-31, Asn-111, Asn-128, Asn-136, Asn-177, Asn-202, Asn-230, Asn-242, Asn-313, Asn-328, Asn-343, Asn-375, Asn-388, Asn-417, Asn-424, Asn-425, Asn-479, and Asn-480. A helical membrane pass occupies residues 558-578 (FVRMIAPSFVVAMVVLVLIFI). Residues 579-613 (EKVFRKTPIQTNRKRYWKKAIQEYYAKNDYEGVPS) are Cytoplasmic-facing.

It belongs to the MTC6 family.

The protein resides in the membrane. In terms of biological role, may be involved in telomere capping. This chain is Maintenance of telomere capping protein 6 (MTC6), found in Candida albicans (strain WO-1) (Yeast).